Reading from the N-terminus, the 314-residue chain is Transcription factor SOX-12 (314 aa).

Disordered stretches follow at residues 1–40 and 101–287; these read MVQQRGARAKRDGGPPPPGPGPAAEGAREPGWCKTPSGHI and MADY…FEFP. Residues 40-108 constitute a DNA-binding region (HMG box); that stretch reads IKRPMNAFMV…KHMADYPDYK (69 aa). A compositionally biased stretch (gly residues) spans 149–159; the sequence is RASGGPLGGGA. Residues 162–173 are compositionally biased toward acidic residues; it reads PEDDDEDEEEEL. Basic and acidic residues predominate over residues 174-187; the sequence is LEVRLLETPGRELW. Positions 191–217 are enriched in low complexity; that stretch reads PAGRAARGPAERAQGPSGEGAAASAAS. The span at 221-243 shows a compositional bias: acidic residues; sequence SEDEEPEEEEEEAATAEEGEEET. Residues 282 to 314 are required for transcriptional activation activity and synergistic coactivation of transcriptional activity with POU3F2; it reads SHFEFPDYCTPEVTEMIAGDWRSSSIADLVFTY.

As to expression, expressed in splenic and thymic regulatory T-cells (at protein level). Expressed in embryonic molar and incisor teeth.

The protein resides in the nucleus. Functionally, transcription factor that binds to DNA at the consensus sequence 5'-ACCAAAG-3'. Acts as a transcriptional activator. Binds cooperatively with POU3F2/BRN2 or POU3F1/OCT6 to gene promoters, which enhances transcriptional activation. Involved in the differentiation of naive CD4-positive T-cells into peripherally induced regulatory T (pT reg) cells under inflammatory conditions. Binds to the promoter region of the FOXP3 gene and promotes its transcription, and might thereby contribute to pT reg cell differentiation in the spleen and lymph nodes during inflammation. Plays a redundant role with SOX4 and SOX11 in cell survival of developing tissues such as the neural tube, branchial arches and somites, thereby contributing to organogenesis. This Mus musculus (Mouse) protein is Transcription factor SOX-12 (Sox12).